A 365-amino-acid chain; its full sequence is uncharacterized protein (365 aa).

Residue 31 to 38 (GPINSGKT) coordinates ATP.

Belongs to the archaeal ATPase family.

This is an uncharacterized protein from Methanocaldococcus jannaschii (strain ATCC 43067 / DSM 2661 / JAL-1 / JCM 10045 / NBRC 100440) (Methanococcus jannaschii).